A 152-amino-acid polypeptide reads, in one-letter code: Deoxyuridine 5'-triphosphate nucleotidohydrolase (152 aa).

Substrate-binding positions include 71-73 (RSG), Asn84, 88-90 (LID), and Met98.

It belongs to the dUTPase family. Mg(2+) serves as cofactor.

The enzyme catalyses dUTP + H2O = dUMP + diphosphate + H(+). Its pathway is pyrimidine metabolism; dUMP biosynthesis; dUMP from dCTP (dUTP route): step 2/2. Functionally, this enzyme is involved in nucleotide metabolism: it produces dUMP, the immediate precursor of thymidine nucleotides and it decreases the intracellular concentration of dUTP so that uracil cannot be incorporated into DNA. This chain is Deoxyuridine 5'-triphosphate nucleotidohydrolase, found in Shewanella sp. (strain MR-7).